Consider the following 1244-residue polypeptide: Protein MMS22-like (1244 aa).

This sequence belongs to the MMS22 family. MMS22L subfamily. As to quaternary structure, component of the MMS22L-TONSL complex, a complex at least composed of MMS22L and TONSL/NFKBIL2. Interacts with RAD51; interaction is direct. In terms of processing, degraded by the ubiquitin-proteasome system upon replication stress.

The protein localises to the nucleus. The protein resides in the chromosome. Its function is as follows. Component of the MMS22L-TONSL complex, a complex that promotes homologous recombination-mediated repair of double-strand breaks (DSBs) at stalled or collapsed replication forks. The MMS22L-TONSL complex is required to maintain genome integrity during DNA replication. It mediates the assembly of RAD51 filaments on single-stranded DNA (ssDNA): the MMS22L-TONSL complex is recruited to DSBs following histone replacement by histone chaperones and eviction of the replication protein A complex (RPA/RP-A) from DSBs. Following recruitment to DSBs, the TONSL-MMS22L complex promotes recruitment of RAD51 filaments and subsequent homologous recombination. Within the complex, MMS22L acts by binding ssDNA. In Bos taurus (Bovine), this protein is Protein MMS22-like (MMS22L).